We begin with the raw amino-acid sequence, 242 residues long: DNA repair protein RecO (242 aa).

This sequence belongs to the RecO family. Monomer.

Involved in DNA repair and RecF pathway recombination. In Salmonella gallinarum (strain 287/91 / NCTC 13346), this protein is DNA repair protein RecO.